The sequence spans 444 residues: MPFMFETILSRVKWTANTLVARLTTLYEYEYPRTAKEETGIDKEYHIKLWDEDIGAMLVSMMRLAGYSEQSQKTHRIFFKEQVARSLGLYPTTYPHQSAWESFMTDDHTPVEMSWSWSGNTPTPVVRYAAEPISWHAGTASDPLNSEATTECLASTAPLAPSLDLRWYRHFLKHLVADDSDGQHDTTDHLSQEFIAFDLDKDSMTVKYYFLPTLKSLACGKTNLELMEESILSLPEADEAVRSSLKVLTTYIRAYPQDEQPQAEIFAVDCVNPANSRLKIYVRSRKTTFDSMLEMMTLGGQTPDLTRDAIDSLRELWCACFALPNNPSVTSKPLRSKEHRTGGLLYYFELRPGAALPTSKVYLPVRHYGKTDDQIARGLSSYLYKRGQCLEGGLSYYEGVRRICKHRSLKQGLGFQTYITCAVKKGVVSVNAYFNPETCQYSRG.

Belongs to the tryptophan dimethylallyltransferase family. Homodimer.

It catalyses the reaction L-tyrosine + dimethylallyl diphosphate = 4-O-dimethylallyl-L-tyrosine + diphosphate. In terms of biological role, 4-O-dimethylallyl-L-tyrosine synthase; part of the gene cluster that mediates the biosynthesis of an unusual class of epipolythiodioxopiperazines (ETPs) lacking the reactive thiol group important for toxicity. Firstly, L-tyrosine is prenylated by tcpD, before undergoing condensation with L-glycine in a reaction catalyzed by the NRPS tcpP leading to the diketopiperazine (DKP) backbone. Afterwards the alpha-carbon of tyrosine is oxidized by the cytochrome P450 tcpC to form a hydroxyl group. However, in contrast other ETP biosynthesis pathways studied so far, tcpC is not able to bishydroxylate the DKP at both alpha-carbon positions, but hydroxylates the alpha-carbon of the tyrosine part and the nitrogen of the glycine part. The next steps involve an alpha,beta-elimination reaction catalyzed by tcpI, a methylation by the methyltransferase tcpN the action of the four enzyme cascade tcpG/K/J/I. Due to a dysfunctional cytochrome P450 monooxygenase tcpC, the pathway leads to the biosynthesis of probable non-toxic metabolites lacking the reactive thiol group. The polypeptide is 4-O-dimethylallyl-L-tyrosine synthase (Claviceps purpurea (strain 20.1) (Ergot fungus)).